The primary structure comprises 403 residues: MLSIKRTLLLLGAVLPAVFGAPVQETRRAAQKIPGKYIVTFKPGTDTATIESHTLWATDLHKRNLERRDTTSGEPPVGIEKSYKIKDFAAYAGSFDDATIEEIRKSADVAHVEEDQIWYLDALTTQKGAPWGLGSISHKGQASTDYIYDTSAGAGTYAYVVDSGINVNHVEFESRASLAYNAAGGSHVDSIGHGTHVAGTIGGKTYGVAKKTNLLSVKVFQGESSSTSIILDGFNWAVNDIVSKGRTKKAAINMSLGGGYSYAFNNAVENAFDEGVLSVVAAGNENSDASNTSPASAPNALTVAAINKSNARASFSNYGSVVDIFAPGQDILSAWIGSTTATNTISGTSMATPHIVGLSVYLMGLENLSGPAAVTARIKELATNGVVTNVKGSPNKLAYNGNA.

The signal sequence occupies residues 1–21 (MLSIKRTLLLLGAVLPAVFGA). Residues 22 to 125 (PVQETRRAAQ…QIWYLDALTT (104 aa)) constitute a propeptide that is removed on maturation. An Inhibitor I9 domain is found at 36–120 (KYIVTFKPGT…HVEEDQIWYL (85 aa)). A Peptidase S8 domain is found at 130–403 (PWGLGSISHK…PNKLAYNGNA (274 aa)). Active-site charge relay system residues include Asp-162 and His-193. Asn-253 and Asn-307 each carry an N-linked (GlcNAc...) asparagine glycan. Ser-349 acts as the Charge relay system in catalysis. A glycan (N-linked (GlcNAc...) asparagine) is linked at Asn-367.

This sequence belongs to the peptidase S8 family.

The protein resides in the secreted. It carries out the reaction Hydrolysis of proteins with broad specificity, and of Bz-Arg-OEt &gt; Ac-Tyr-OEt. Does not hydrolyze peptide amides.. Functionally, secreted alkaline protease that allows assimilation of proteinaceous substrates. Acts as a significant virulence factor in invasive aspergillosis. Involved in immune evasion from the human and mice complement systems during infection. Efficiently cleaves important components of the complement cascade such as such as C3, C4, C5, and C1q, as well as IgG, which leads to down-regulation of complement activation at the hyphal surface. This Aspergillus fumigatus (strain CBS 144.89 / FGSC A1163 / CEA10) (Neosartorya fumigata) protein is Alkaline protease 1 (alp1).